The sequence spans 421 residues: F-box only protein 9 (421 aa).

The interval 1–63 (MAESNQNTDG…AELRRRQETA (63 aa)) is disordered. Positions 11–20 (AVEEGEDENT) are enriched in acidic residues. The span at 40 to 52 (LQPSSGGQRSFSR) shows a compositional bias: polar residues. Residues 54-63 (AELRRRQETA) show a composition bias toward basic and acidic residues. Residues 68 to 101 (ARELFLKAVEEEQNGAVYEAIKYYKSAMQLVPDI) form a TPR repeat. Positions 158–209 (QVHISALPFEVLMYIFRWVVSCDLDLRALEQLSLVCRGFYICARDPEIWRSA) constitute an F-box domain.

As to quaternary structure, part of the SCF (SKP1-CUL1-F-box) E3 ubiquitin-protein ligase complex SCF(fbxo9).

Its subcellular location is the cytoplasm. The protein operates within protein modification; protein ubiquitination. In terms of biological role, substrate recognition component of a SCF (SKP1-CUL1-F-box protein) E3 ubiquitin-protein ligase complex which mediates the ubiquitination and subsequent proteasomal degradation of target proteins and acts as a regulator of mTOR signaling. This chain is F-box only protein 9 (fbxo9), found in Danio rerio (Zebrafish).